We begin with the raw amino-acid sequence, 132 residues long: Small ribosomal subunit protein uS8 (132 aa).

This sequence belongs to the universal ribosomal protein uS8 family. Part of the 30S ribosomal subunit. Contacts proteins S5 and S12.

Functionally, one of the primary rRNA binding proteins, it binds directly to 16S rRNA central domain where it helps coordinate assembly of the platform of the 30S subunit. This is Small ribosomal subunit protein uS8 from Clostridium botulinum (strain 657 / Type Ba4).